A 58-amino-acid chain; its full sequence is Large ribosomal subunit protein bL32 (58 aa).

Residues 1 to 23 form a disordered region; that stretch reads MAVPARHTSSAKKNRRRTHYKLT. The span at 9–20 shows a compositional bias: basic residues; the sequence is SSAKKNRRRTHY.

It belongs to the bacterial ribosomal protein bL32 family.

This Lactococcus lactis subsp. cremoris (Streptococcus cremoris) protein is Large ribosomal subunit protein bL32 (rpmF).